The primary structure comprises 263 residues: Endonuclease 8 (263 aa).

The active-site Schiff-base intermediate with DNA is proline 2. The active-site Proton donor is glutamate 3. Residue lysine 53 is the Proton donor; for beta-elimination activity of the active site. The DNA site is built by glutamine 70, arginine 125, and asparagine 169. The segment at 229 to 263 adopts an FPG-type zinc-finger fold; the sequence is KVFHRDGEACERCGGIIEKTTLSSRPFYWCPHCQK. The active-site Proton donor; for delta-elimination activity is arginine 253.

Belongs to the FPG family. It depends on Zn(2+) as a cofactor.

The catalysed reaction is 2'-deoxyribonucleotide-(2'-deoxyribose 5'-phosphate)-2'-deoxyribonucleotide-DNA = a 3'-end 2'-deoxyribonucleotide-(2,3-dehydro-2,3-deoxyribose 5'-phosphate)-DNA + a 5'-end 5'-phospho-2'-deoxyribonucleoside-DNA + H(+). Functionally, involved in base excision repair of DNA damaged by oxidation or by mutagenic agents. Acts as a DNA glycosylase that recognizes and removes damaged bases. Has a preference for oxidized pyrimidines, such as thymine glycol, 5,6-dihydrouracil and 5,6-dihydrothymine. Has AP (apurinic/apyrimidinic) lyase activity and introduces nicks in the DNA strand. Cleaves the DNA backbone by beta-delta elimination to generate a single-strand break at the site of the removed base with both 3'- and 5'-phosphates. The sequence is that of Endonuclease 8 from Salmonella agona (strain SL483).